The primary structure comprises 129 residues: Iron-sulfur cluster assembly 1 homolog, mitochondrial (129 aa).

A mitochondrion-targeting transit peptide spans 1–12 (MSASIARATVRA). Fe cation contacts are provided by Cys-57, Cys-121, and Cys-123.

This sequence belongs to the HesB/IscA family.

It localises to the mitochondrion. Functionally, involved in the maturation of mitochondrial 4Fe-4S proteins functioning late in the iron-sulfur cluster assembly pathway. Probably involved in the binding of an intermediate of Fe/S cluster assembly. The chain is Iron-sulfur cluster assembly 1 homolog, mitochondrial (isca1) from Danio rerio (Zebrafish).